The primary structure comprises 62 residues: Large ribosomal subunit protein bL32 (62 aa).

Residues 1 to 16 show a composition bias toward basic residues; it reads MAVPKRKTSPMKRGFR. Residues 1-62 form a disordered region; sequence MAVPKRKTSP…QILTPKNKEA (62 aa). Positions 28–44 are enriched in basic and acidic residues; the sequence is VEDKDSGELRRPHHVDL.

The protein belongs to the bacterial ribosomal protein bL32 family.

This Methylocella silvestris (strain DSM 15510 / CIP 108128 / LMG 27833 / NCIMB 13906 / BL2) protein is Large ribosomal subunit protein bL32.